Here is a 442-residue protein sequence, read N- to C-terminus: MPVHFNQSVGMPPARDGARPPPIKGGLMGKLIPATYSPNGRHPRIAPPPPPTPPAGAGAGAGAAPPQRQLLQHSPTTAPGPRRPSNPSSPQHPQQPGIDRFPQIIPYQHEQPQRRPSRQQYSASPPVDYSFGKGPKQSGLDQSSSTSSSVSPKQEMKQMSIHNLLSSGDQDDQDDKSINNSNTARASSASLASLASPRSVLPPAAMPSPSPSFSTSEYHLHVRQQPVAARSCGFGERDRRVIDPPPIVQMTIDDPSATPDQMQQRLRHPFSVVHCSIYNETGEEDNSAMPEDYRQQRRLMGTLVASPFVGKDENGEDGCFFCFPDLSCRTPGSFRLKFSLVVINPADMRQGLRTPIAATAMSDVLVVYNAKDFPGMQASTPLTRKLKEQGCLISIKKGNEKGGGGGGGGPSGSRDQYSDDEYDDDGGGGSGRAGKRKRIRRS.

Disordered regions lie at residues 1–192 (MPVH…ASLA) and 396–442 (KKGN…IRRS). A compositionally biased stretch (pro residues) spans 45–54 (IAPPPPPTPP). The span at 79–97 (PGPRRPSNPSSPQHPQQPG) shows a compositional bias: low complexity. Residues 213-396 (FSTSEYHLHV…KEQGCLISIK (184 aa)) form the Velvet domain. The segment covering 401–411 (KGGGGGGGGPS) has biased composition (gly residues). A compositionally biased stretch (basic residues) spans 433-442 (AGKRKRIRRS).

It belongs to the velvet family. VelC subfamily.

The protein localises to the nucleus. Its function is as follows. Velvet-domain-containing protein that acts as a positive regulator of sexual development. Plays an important role in pathogenicity through regulating positively appressorium-mediated penetration and invasive growth. The sequence is that of Sexual development regulator VELC from Pyricularia oryzae (strain 70-15 / ATCC MYA-4617 / FGSC 8958) (Rice blast fungus).